The following is a 256-amino-acid chain: MFNLILWPLFLLTSVAIPLQLTLEVVYLTSSVDFSKASAAKTATSLGQSPVVITIYKSLLKYWSLYEFIHFIYLYTPIDAFLNFLPFTSLLMSFGSICLTRELVYDFIAFMESQNKLTGFLNKITEPNFNSYLLFSSIYNIWFADDTNDKFLFGKLTQILISVTKRYEFPRTFYLAKVSDFLQNLILTRLRPFVTEQPQGDKNRYQNGDRESTKNGAAYQKSSQQSSSFEQNFTSTEFPNDYDFMEDILDETTELD.

An N-terminal signal peptide occupies residues Met1 to Ala16. Topologically, residues Ile17 to Glu67 are lumenal. The helical transmembrane segment at Phe68–Thr88 threads the bilayer. Residues Ser89–Asp256 lie on the Cytoplasmic side of the membrane. Residues Gln197–Asp243 form a disordered region. Over residues Gln199–Thr213 the composition is skewed to basic and acidic residues. Low complexity predominate over residues Ser222 to Phe238. Positions Tyr242–Met245 match the ATG8-binding motif.

In terms of assembly, interacts with ATG8 and ATG11.

The protein resides in the endoplasmic reticulum membrane. It is found in the preautophagosomal structure membrane. Acts as a receptor for reticulophagy. Directs autophagic sequestration of folded tubules/sheets derived from the cortical endoplasmic reticulum (cER) and the cytoplasmic endoplasmic reticulum (cytoER) into autophagosomes. Is not required for the cytoplasm-to-vacuole targeting pathway, mitophagy, pexophagy, and non-selective autophagy. The sequence is that of Autophagy-related protein 40 from Saccharomyces cerevisiae (strain ATCC 204508 / S288c) (Baker's yeast).